Reading from the N-terminus, the 358-residue chain is Peptide chain release factor 1 (358 aa).

Gln-233 is modified (N5-methylglutamine).

It belongs to the prokaryotic/mitochondrial release factor family. Methylated by PrmC. Methylation increases the termination efficiency of RF1.

It is found in the cytoplasm. Its function is as follows. Peptide chain release factor 1 directs the termination of translation in response to the peptide chain termination codons UAG and UAA. The protein is Peptide chain release factor 1 of Agathobacter rectalis (strain ATCC 33656 / DSM 3377 / JCM 17463 / KCTC 5835 / VPI 0990) (Eubacterium rectale).